We begin with the raw amino-acid sequence, 559 residues long: Sesquiterpene synthase (559 aa).

Asp312, Asp316, and Glu464 together coordinate Mg(2+). Positions 312–316 (DDIYD) match the DDXXD motif motif.

Belongs to the terpene synthase family. Tpsa subfamily. Requires Mg(2+) as cofactor. Mn(2+) is required as a cofactor.

Functionally, catalyzes alpha-humulene and delta-cadinene, as well as beta-elemene, the thermal rearrangement product of germacrene A and several other bicyclic sesquiterpenes when incubated with (2E,6E)-farnesyl diphosphate. The sequence is that of Sesquiterpene synthase from Santalum austrocaledonicum (Sandalwood).